The following is a 242-amino-acid chain: Tryptophan synthase alpha chain (242 aa).

Catalysis depends on proton acceptor residues Glu-31 and Asp-42.

This sequence belongs to the TrpA family. As to quaternary structure, tetramer of two alpha and two beta chains.

It carries out the reaction (1S,2R)-1-C-(indol-3-yl)glycerol 3-phosphate + L-serine = D-glyceraldehyde 3-phosphate + L-tryptophan + H2O. Its pathway is amino-acid biosynthesis; L-tryptophan biosynthesis; L-tryptophan from chorismate: step 5/5. Its function is as follows. The alpha subunit is responsible for the aldol cleavage of indoleglycerol phosphate to indole and glyceraldehyde 3-phosphate. In Staphylococcus aureus (strain USA300), this protein is Tryptophan synthase alpha chain.